The sequence spans 20 residues: Brevinin-1ITb (20 aa).

A Methionine sulfoxide; partial modification is found at M8. C14 and C20 are joined by a disulfide.

This sequence belongs to the frog skin active peptide (FSAP) family. Brevinin subfamily. Expressed by the skin glands.

The protein resides in the secreted. Its function is as follows. Antimicrobial peptide. This Rana italica (Italian stream frog) protein is Brevinin-1ITb.